A 166-amino-acid chain; its full sequence is Ribosome maturation factor RimM (166 aa).

Positions 91 to 163 constitute a PRC barrel domain; it reads EDEFYEFQLI…KMQITPPEGW (73 aa).

This sequence belongs to the RimM family. Binds ribosomal protein uS19.

It is found in the cytoplasm. Functionally, an accessory protein needed during the final step in the assembly of 30S ribosomal subunit, possibly for assembly of the head region. Essential for efficient processing of 16S rRNA. May be needed both before and after RbfA during the maturation of 16S rRNA. It has affinity for free ribosomal 30S subunits but not for 70S ribosomes. This is Ribosome maturation factor RimM from Sulfurihydrogenibium sp. (strain YO3AOP1).